The following is a 68-amino-acid chain: UPF0253 protein VF_0662 (68 aa).

This sequence belongs to the UPF0253 family.

The sequence is that of UPF0253 protein VF_0662 from Aliivibrio fischeri (strain ATCC 700601 / ES114) (Vibrio fischeri).